The primary structure comprises 363 residues: Sulfate/thiosulfate import ATP-binding protein CysA (363 aa).

An ABC transporter domain is found at 3–237 (IEINNISKYF…PATRFVLEFL (235 aa)). 35–42 (GPSGSGKT) lines the ATP pocket.

The protein belongs to the ABC transporter superfamily. Sulfate/tungstate importer (TC 3.A.1.6) family. In terms of assembly, the complex is composed of two ATP-binding proteins (CysA), two transmembrane proteins (CysT and CysW) and a solute-binding protein (CysP).

It is found in the cell inner membrane. It catalyses the reaction sulfate(out) + ATP + H2O = sulfate(in) + ADP + phosphate + H(+). It carries out the reaction thiosulfate(out) + ATP + H2O = thiosulfate(in) + ADP + phosphate + H(+). Its function is as follows. Part of the ABC transporter complex CysAWTP involved in sulfate/thiosulfate import. Responsible for energy coupling to the transport system. The protein is Sulfate/thiosulfate import ATP-binding protein CysA of Yersinia pestis.